The primary structure comprises 1238 residues: DNA-directed RNA polymerase subunit beta (1238 aa).

Belongs to the RNA polymerase beta chain family. The RNAP catalytic core consists of 2 alpha, 1 beta, 1 beta' and 1 omega subunit. When a sigma factor is associated with the core the holoenzyme is formed, which can initiate transcription.

The catalysed reaction is RNA(n) + a ribonucleoside 5'-triphosphate = RNA(n+1) + diphosphate. In terms of biological role, DNA-dependent RNA polymerase catalyzes the transcription of DNA into RNA using the four ribonucleoside triphosphates as substrates. The sequence is that of DNA-directed RNA polymerase subunit beta from Clostridioides difficile (strain 630) (Peptoclostridium difficile).